A 542-amino-acid polypeptide reads, in one-letter code: CTP synthase (542 aa).

The segment at 1 to 265 is amidoligase domain; that stretch reads MARYVFITGG…DSEVLSAFGI (265 aa). Residue serine 13 coordinates CTP. Serine 13 provides a ligand contact to UTP. An ATP-binding site is contributed by 14–19; it reads SLGKGI. Tyrosine 54 is an L-glutamine binding site. Aspartate 71 is a binding site for ATP. Positions 71 and 139 each coordinate Mg(2+). CTP is bound by residues 146–148, 186–191, and lysine 222; these read DIE and KTKPTQ. UTP-binding positions include 186–191 and lysine 222; that span reads KTKPTQ. Residues 291-541 form the Glutamine amidotransferase type-1 domain; that stretch reads TIAIVGKYTG…IEAAIEQSRL (251 aa). Glycine 353 contributes to the L-glutamine binding site. The Nucleophile; for glutamine hydrolysis role is filled by cysteine 380. Residues 381–384, glutamate 404, and arginine 469 contribute to the L-glutamine site; that span reads FGMQ. Residues histidine 514 and glutamate 516 contribute to the active site.

The protein belongs to the CTP synthase family. In terms of assembly, homotetramer.

The enzyme catalyses UTP + L-glutamine + ATP + H2O = CTP + L-glutamate + ADP + phosphate + 2 H(+). It catalyses the reaction L-glutamine + H2O = L-glutamate + NH4(+). It carries out the reaction UTP + NH4(+) + ATP = CTP + ADP + phosphate + 2 H(+). The protein operates within pyrimidine metabolism; CTP biosynthesis via de novo pathway; CTP from UDP: step 2/2. Its activity is regulated as follows. Allosterically activated by GTP, when glutamine is the substrate; GTP has no effect on the reaction when ammonia is the substrate. The allosteric effector GTP functions by stabilizing the protein conformation that binds the tetrahedral intermediate(s) formed during glutamine hydrolysis. Inhibited by the product CTP, via allosteric rather than competitive inhibition. In terms of biological role, catalyzes the ATP-dependent amination of UTP to CTP with either L-glutamine or ammonia as the source of nitrogen. Regulates intracellular CTP levels through interactions with the four ribonucleotide triphosphates. The chain is CTP synthase from Brucella anthropi (strain ATCC 49188 / DSM 6882 / CCUG 24695 / JCM 21032 / LMG 3331 / NBRC 15819 / NCTC 12168 / Alc 37) (Ochrobactrum anthropi).